Reading from the N-terminus, the 72-residue chain is UPF0154 protein lhv_1362 (72 aa).

The helical transmembrane segment at 3-23 (LGLAIFLIIIALLVGAVAGFY) threads the bilayer.

The protein belongs to the UPF0154 family.

Its subcellular location is the cell membrane. The protein is UPF0154 protein lhv_1362 of Lactobacillus helveticus (strain DPC 4571).